Consider the following 898-residue polypeptide: Vacuolar membrane protease (898 aa).

Topologically, residues 1–14 are cytoplasmic; it reads MGIVDYLVAAVSFR. The helical transmembrane segment at 15-35 threads the bilayer; sequence TLPTTFVAVLVYLAIFISVLI. At 36 to 342 the chain is on the vacuolar side; that stretch reads TDELPATPKD…LFGQALIVFP (307 aa). N-linked (GlcNAc...) asparagine glycosylation is found at Asn50, Asn103, and Asn110. Residues His139 and Asp151 each coordinate Zn(2+). Glu183 acts as the Proton acceptor in catalysis. Glu184 provides a ligand contact to Zn(2+). N-linked (GlcNAc...) asparagine glycosylation is present at Asn200. Zn(2+)-binding residues include Glu209 and His284. Residues 343–365 traverse the membrane as a helical segment; that stretch reads LSAMITFNIVFLVVGPIMLALLV. Residues 366 to 411 lie on the Cytoplasmic side of the membrane; the sequence is TFDIVARHRRQEMIGGGYEEQGFFARAWTSFKSFRWVGGFWKHAKF. A helical transmembrane segment spans residues 412 to 432; that stretch reads WVALAVTVGLQVLLCVGYLYI. Residue Asn433 is a topological domain, vacuolar. A helical transmembrane segment spans residues 434 to 454; sequence PLIAYSSSHIVLLSFLSLAYL. The Cytoplasmic portion of the chain corresponds to 455-479; that stretch reads STYLVHNIPSPTDTYGSHLPEQQKQ. A helical membrane pass occupies residues 480–500; it reads AALFQLYFFTWILLLAATVVG. The Vacuolar segment spans residues 501 to 509; sequence AKLSVGSFY. The chain crosses the membrane as a helical span at residues 510–530; sequence ILSLWNAVLFAACAIGSIAGL. Residues 531–593 lie on the Cytoplasmic side of the membrane; sequence LSSHTVEGDA…PGGKEGEEVS (63 aa). Residues 594–614 traverse the membrane as a helical segment; it reads GAIGWWFVQFVLSVPAVVILV. Topologically, residues 615–635 are vacuolar; that stretch reads SQLALLMLAATEQTLADGSPA. A helical transmembrane segment spans residues 636 to 656; the sequence is VTVYGGASLMSVLAILPLAPF. The Cytoplasmic segment spans residues 657–664; it reads ACKLHRRV. A helical transmembrane segment spans residues 665–685; sequence AYVALVVLIASTAYAWLVFPF. The Vacuolar portion of the chain corresponds to 686 to 898; it reads SERAPLKVFF…LVEGYKAFAV (213 aa). Residues Asn704, Asn733, and Asn764 are each glycosylated (N-linked (GlcNAc...) asparagine).

The protein belongs to the peptidase M28 family. Zn(2+) serves as cofactor.

It localises to the vacuole membrane. Its function is as follows. May be involved in vacuolar sorting and osmoregulation. This chain is Vacuolar membrane protease, found in Schizophyllum commune (strain H4-8 / FGSC 9210) (Split gill fungus).